Here is a 130-residue protein sequence, read N- to C-terminus: Protein ApaG (130 aa).

Residues 3–127 (RAITRNIQVT…FSLDVPDVRR (125 aa)) form the ApaG domain.

This chain is Protein ApaG, found in Xanthobacter autotrophicus (strain ATCC BAA-1158 / Py2).